The following is a 497-amino-acid chain: MAMEQRPKTKIVCTLGPASRSVPMVEKLLMAGMSVARFNFSHGSYEYHQETLDNLRQAMLNTGMLCAVMLDTKGPEIRTGFLKDGKPIQLKQGQEITISTDYDLKGDEKTICMSYKKLAQDVNPGMVILCADGTISLKVLSCDKEKGTVRCRCENTSMLGERKNVNLPGVVVDLPTLTEKDKQDILEWGVPNQIDMIALSFVRKGSDLVQVRKLLGKHAKTILLMSKVENQEGVANFDDILINSDAFMIARGDLGMEIPIEKIFLAQKVMIYKCNFMGKPVVTATQMLESMIKSPRPTRAEATDVANAVLDGTDCVMLSGETAAGAYPELAVRTMAKICVEAESTLDYGDIFKRIMLHAAVPMSPMESLASSAVRTATSSRATLMMVLTRGGSTARLVAKYRPGIPILSVVVPEITSDSFDWACSNEAPARHSLIYRGLVPVLYAGSARASIDESTEETLEFASEYGKKKQLCKTGDSVVALFRTGNAIVIKILTVK.

Position 37 (Arg37) interacts with substrate. Residues Asn39, Ser41, Asp71, and Thr72 each contribute to the K(+) site. Residue 39 to 42 coordinates ATP; it reads NFSH. Residues Arg78 and Lys163 each contribute to the ATP site. Lys227 is a substrate binding site. Residue Glu229 participates in Mg(2+) binding. Positions 252, 253, and 285 each coordinate substrate. Asp253 contacts Mg(2+).

It belongs to the pyruvate kinase family. Homotetramer. It depends on Mg(2+) as a cofactor. K(+) is required as a cofactor.

The protein localises to the cytoplasm. It localises to the cytosol. It carries out the reaction pyruvate + ATP = phosphoenolpyruvate + ADP + H(+). It participates in carbohydrate degradation; glycolysis; pyruvate from D-glyceraldehyde 3-phosphate: step 5/5. In terms of biological role, key regulatory enzyme of the glycolytic pathway that catalyzes the final step of glycolysis, converting ADP and phosphoenolpyruvate (PEP) to ATP and pyruvate by essentially irreversible transphosphorylation. This is Probable pyruvate kinase, cytosolic isozyme from Arabidopsis thaliana (Mouse-ear cress).